A 294-amino-acid chain; its full sequence is Lipoyl synthase (294 aa).

[4Fe-4S] cluster-binding residues include Cys-35, Cys-40, Cys-46, Cys-61, Cys-65, Cys-68, and Ser-275. The 219-residue stretch at 46–264 folds into the Radical SAM core domain; sequence CWGGGTATVM…REAGLGLGFR (219 aa).

It belongs to the radical SAM superfamily. Lipoyl synthase family. Requires [4Fe-4S] cluster as cofactor.

Its subcellular location is the cytoplasm. It carries out the reaction [[Fe-S] cluster scaffold protein carrying a second [4Fe-4S](2+) cluster] + N(6)-octanoyl-L-lysyl-[protein] + 2 oxidized [2Fe-2S]-[ferredoxin] + 2 S-adenosyl-L-methionine + 4 H(+) = [[Fe-S] cluster scaffold protein] + N(6)-[(R)-dihydrolipoyl]-L-lysyl-[protein] + 4 Fe(3+) + 2 hydrogen sulfide + 2 5'-deoxyadenosine + 2 L-methionine + 2 reduced [2Fe-2S]-[ferredoxin]. It functions in the pathway protein modification; protein lipoylation via endogenous pathway; protein N(6)-(lipoyl)lysine from octanoyl-[acyl-carrier-protein]: step 2/2. Catalyzes the radical-mediated insertion of two sulfur atoms into the C-6 and C-8 positions of the octanoyl moiety bound to the lipoyl domains of lipoate-dependent enzymes, thereby converting the octanoylated domains into lipoylated derivatives. This is Lipoyl synthase from Anaeromyxobacter sp. (strain Fw109-5).